A 438-amino-acid polypeptide reads, in one-letter code: UDP-N-acetylmuramoylalanine--D-glutamate ligase (438 aa).

Residue G112–T118 participates in ATP binding.

The protein belongs to the MurCDEF family.

The protein localises to the cytoplasm. It carries out the reaction UDP-N-acetyl-alpha-D-muramoyl-L-alanine + D-glutamate + ATP = UDP-N-acetyl-alpha-D-muramoyl-L-alanyl-D-glutamate + ADP + phosphate + H(+). The protein operates within cell wall biogenesis; peptidoglycan biosynthesis. Cell wall formation. Catalyzes the addition of glutamate to the nucleotide precursor UDP-N-acetylmuramoyl-L-alanine (UMA). In Salmonella paratyphi A (strain ATCC 9150 / SARB42), this protein is UDP-N-acetylmuramoylalanine--D-glutamate ligase.